The sequence spans 354 residues: Rhodopsin (354 aa).

At Met1–Ala36 the chain is on the extracellular side. Asn2 and Asn15 each carry an N-linked (GlcNAc...) asparagine glycan. Residues Tyr37–Val61 traverse the membrane as a helical segment. Topologically, residues Thr62–Asn73 are cytoplasmic. A helical membrane pass occupies residues Tyr74–Tyr96. Residues Thr97–Cys110 lie on the Extracellular side of the membrane. Residues Cys110 and Cys187 are joined by a disulfide bond. A helical transmembrane segment spans residues Asn111–Ile133. Residues Glu134 to Trp136 carry the 'Ionic lock' involved in activated form stabilization motif. The Cytoplasmic portion of the chain corresponds to Glu134–His152. Residues Ala153–Val173 traverse the membrane as a helical segment. Residues Gly174–Ser202 lie on the Extracellular side of the membrane. A glycan (N-linked (GlcNAc...) asparagine) is linked at Asn200. Residues Phe203 to Gly224 form a helical membrane-spanning segment. Topologically, residues Arg225–Arg252 are cytoplasmic. Residues Met253–Tyr274 traverse the membrane as a helical segment. The Extracellular portion of the chain corresponds to Ile275–Val286. A helical membrane pass occupies residues Phe287–Cys308. Lys296 bears the N6-(retinylidene)lysine mark. The Cytoplasmic segment spans residues Met309–Ala354. Residues Gly333–Ala354 form a disordered region. Residues Ala334 to Ala354 show a composition bias toward low complexity.

It belongs to the G-protein coupled receptor 1 family. Opsin subfamily. In terms of processing, phosphorylated on some or all of the serine and threonine residues present in the C-terminal region. Post-translationally, contains one covalently linked retinal chromophore. In terms of tissue distribution, retinal rod photoreceptor cells, predominantly in the outer segments (at protein level). Retinal rod photoreceptor cells.

Its subcellular location is the membrane. The protein localises to the cell projection. It is found in the cilium. It localises to the photoreceptor outer segment. Functionally, photoreceptor required for image-forming vision at low light intensity. While most salt water fish species use retinal as chromophore, most freshwater fish use 3-dehydroretinal, or a mixture of retinal and 3-dehydroretinal. Light-induced isomerization of 11-cis to all-trans retinal triggers a conformational change that activates signaling via G-proteins. Subsequent receptor phosphorylation mediates displacement of the bound G-protein alpha subunit by arrestin and terminates signaling. This chain is Rhodopsin (rho), found in Danio rerio (Zebrafish).